Here is a 184-residue protein sequence, read N- to C-terminus: dCTP deaminase (184 aa).

Lysine 107–arginine 112 is a dCTP binding site. The Proton donor/acceptor role is filled by glutamate 133. Glutamine 152, tyrosine 166, and glutamine 176 together coordinate dCTP.

This sequence belongs to the dCTP deaminase family. As to quaternary structure, homotrimer.

It catalyses the reaction dCTP + H2O + H(+) = dUTP + NH4(+). Its pathway is pyrimidine metabolism; dUMP biosynthesis; dUMP from dCTP (dUTP route): step 1/2. In terms of biological role, catalyzes the deamination of dCTP to dUTP. The protein is dCTP deaminase of Roseiflexus castenholzii (strain DSM 13941 / HLO8).